We begin with the raw amino-acid sequence, 59 residues long: UPF0181 protein YoaH (59 aa).

Belongs to the UPF0181 family.

The sequence is that of UPF0181 protein YoaH from Escherichia coli O127:H6 (strain E2348/69 / EPEC).